A 369-amino-acid polypeptide reads, in one-letter code: 3-isopropylmalate dehydrogenase (369 aa).

An NAD(+)-binding site is contributed by 76–89 (GPKWDRNPSHLRPE). The substrate site is built by Arg-96, Arg-106, Arg-134, and Asp-223. Mg(2+) is bound by residues Asp-223, Asp-247, and Asp-251. An NAD(+)-binding site is contributed by 281–293 (GSAPDIAGQNKAN).

It belongs to the isocitrate and isopropylmalate dehydrogenases family. LeuB type 1 subfamily. In terms of assembly, homodimer. Mg(2+) serves as cofactor. Mn(2+) is required as a cofactor.

It localises to the cytoplasm. It catalyses the reaction (2R,3S)-3-isopropylmalate + NAD(+) = 4-methyl-2-oxopentanoate + CO2 + NADH. It functions in the pathway amino-acid biosynthesis; L-leucine biosynthesis; L-leucine from 3-methyl-2-oxobutanoate: step 3/4. In terms of biological role, catalyzes the oxidation of 3-carboxy-2-hydroxy-4-methylpentanoate (3-isopropylmalate) to 3-carboxy-4-methyl-2-oxopentanoate. The product decarboxylates to 4-methyl-2 oxopentanoate. The polypeptide is 3-isopropylmalate dehydrogenase (leuB) (Priestia megaterium (strain DSM 319 / IMG 1521) (Bacillus megaterium)).